A 339-amino-acid polypeptide reads, in one-letter code: O-methyltransferase 7 (339 aa).

S-adenosyl-L-methionine is bound by residues Gly186, Asp209, Ser232, Phe233, and Lys246. The active-site Proton acceptor is the His250.

This sequence belongs to the class I-like SAM-binding methyltransferase superfamily. Cation-independent O-methyltransferase family. COMT subfamily.

The enzyme catalyses (3,5-dichloro-2,4,6-trihydroxyphenyl)hexan-1-one + S-adenosyl-L-methionine = 1-(3,5-dichloro-2,6-dihydroxy-4-methoxyphenyl)hexan-1-one + S-adenosyl-L-homocysteine + H(+). The chain is O-methyltransferase 7 (omt7) from Dictyostelium discoideum (Social amoeba).